The chain runs to 178 residues: MSRIGYKEIDLPAGVEVSQEGNVVTVKGPKGTLSREISPLITMSVEGNVVKFERSGEDNKVRALHGTTRANVNNMVEGVVNGFKKTLKLVGVGYRAQFKGDKLILTVGYSNPVEMTKPAEVEIAVPDNTTIEISGIDKQEVGDFAAEVRAVRSPEPYKGKGIRYENEHIVRNEGKTGK.

The protein belongs to the universal ribosomal protein uL6 family. As to quaternary structure, part of the 50S ribosomal subunit.

This protein binds to the 23S rRNA, and is important in its secondary structure. It is located near the subunit interface in the base of the L7/L12 stalk, and near the tRNA binding site of the peptidyltransferase center. This chain is Large ribosomal subunit protein uL6, found in Limosilactobacillus fermentum (strain NBRC 3956 / LMG 18251) (Lactobacillus fermentum).